Consider the following 77-residue polypeptide: Exodeoxyribonuclease 7 small subunit (77 aa).

This sequence belongs to the XseB family. In terms of assembly, heterooligomer composed of large and small subunits.

It is found in the cytoplasm. The catalysed reaction is Exonucleolytic cleavage in either 5'- to 3'- or 3'- to 5'-direction to yield nucleoside 5'-phosphates.. In terms of biological role, bidirectionally degrades single-stranded DNA into large acid-insoluble oligonucleotides, which are then degraded further into small acid-soluble oligonucleotides. The polypeptide is Exodeoxyribonuclease 7 small subunit (Carboxydothermus hydrogenoformans (strain ATCC BAA-161 / DSM 6008 / Z-2901)).